The chain runs to 807 residues: SWI/SNF complex subunit SWI3C (807 aa).

The interval 1-74 is disordered; it reads MPASEDRRGK…DPGLGIGEVV (74 aa). Over residues 28 to 54 the composition is skewed to acidic residues; the sequence is EEEDMEEEDEENNNNNNEEMDDVENAD. An SWIRM domain is found at 176 to 274; sequence HVLPMHSDWF…YCATAQSHPG (99 aa). A ZZ-type; degenerate zinc finger spans residues 340–394; sequence LCDSHCNHCSRPLPTVYFQSQKKGDILLCCDCFHHGRFVVGHSCLDFVRVDPMKF. Zn(2+)-binding residues include Cys-345, Cys-348, Cys-368, and Cys-371. In terms of domain architecture, SANT spans 398–449; that stretch reads QDGDNWTDQETLLLLEAVELYNENWVQIADHVGSKSKAQCILHFLRLPVEDG. 2 stretches are compositionally biased toward polar residues: residues 458-467 and 552-569; these read GVTNTENPTN and ENQQ…NGAE. Disordered stretches follow at residues 458–487 and 549–571; these read GVTN…SEQG and LDGE…AEAQ. Residues 598-656 adopt a coiled-coil conformation; sequence ADHEEREIQRLSANIVNHQLKRMELKLKQFAEIETLLMKECEQVEKTRQRFSAERARML. Composition is skewed to low complexity over residues 692-703 and 726-739; these read QHQQQQASATSQ and QQQQ…QQQQ. 3 disordered regions span residues 692–713, 721–740, and 781–807; these read QHQQ…FSNN, HFMA…QQQA, and SINQ…LGLN. Over residues 798-807 the composition is skewed to gly residues; the sequence is SGSGSGLGLN.

As to quaternary structure, heterodimer. Interacts with SWI3A, SWI3B and BRM, but not with BSH. Interacts with MORC6 and SUVH9. Expressed in roots, stems, leaves, flowers and siliques.

The protein resides in the nucleus. Its function is as follows. Component of a multiprotein complex equivalent of the SWI/SNF complex, an ATP-dependent chromatin-remodeling complex, which is required for the positive and negative regulation of gene expression of a large number of genes. It changes chromatin structure by altering DNA-histone contacts within a nucleosome, leading eventually to a change in nucleosome position, thus facilitating or repressing binding of gene-specific transcription factors. The protein is SWI/SNF complex subunit SWI3C (SWI3C) of Arabidopsis thaliana (Mouse-ear cress).